Consider the following 231-residue polypeptide: Mediator of RNA polymerase II transcription subunit 18 (231 aa).

Residues 191-218 (HLTDIEALNKAVKELEKVKTELHGLMNL) adopt a coiled-coil conformation.

This sequence belongs to the Mediator complex subunit 18 family. Component of the Mediator complex.

It localises to the nucleus. Component of the Mediator complex, a coactivator involved in the regulated transcription of nearly all RNA polymerase II-dependent genes. Mediator functions as a bridge to convey information from gene-specific regulatory proteins to the basal RNA polymerase II transcription machinery. Mediator is recruited to promoters by direct interactions with regulatory proteins and serves as a scaffold for the assembly of a functional preinitiation complex with RNA polymerase II and the general transcription factors. This chain is Mediator of RNA polymerase II transcription subunit 18 (SRB5), found in Yarrowia lipolytica (strain CLIB 122 / E 150) (Yeast).